We begin with the raw amino-acid sequence, 421 residues long: 3-isopropylmalate dehydratase large subunit (421 aa).

3 residues coordinate [4Fe-4S] cluster: C302, C362, and C365.

This sequence belongs to the aconitase/IPM isomerase family. LeuC type 2 subfamily. In terms of assembly, heterodimer of LeuC and LeuD. The cofactor is [4Fe-4S] cluster.

The enzyme catalyses (2R,3S)-3-isopropylmalate = (2S)-2-isopropylmalate. It participates in amino-acid biosynthesis; L-leucine biosynthesis; L-leucine from 3-methyl-2-oxobutanoate: step 2/4. In terms of biological role, catalyzes the isomerization between 2-isopropylmalate and 3-isopropylmalate, via the formation of 2-isopropylmaleate. The sequence is that of 3-isopropylmalate dehydratase large subunit from Campylobacter fetus subsp. fetus (strain 82-40).